A 264-amino-acid polypeptide reads, in one-letter code: Small ribosomal subunit protein eS1 (264 aa).

The segment at 232–264 (HGEGGGSGKPSGDETGAKVERADGYEPPVQESV) is disordered. The span at 242 to 255 (SGDETGAKVERADG) shows a compositional bias: basic and acidic residues.

The protein belongs to the eukaryotic ribosomal protein eS1 family. Component of the small ribosomal subunit. Mature ribosomes consist of a small (40S) and a large (60S) subunit. The 40S subunit contains about 33 different proteins and 1 molecule of RNA (18S). The 60S subunit contains about 49 different proteins and 3 molecules of RNA (28S, 5.8S and 5S). Part of the small subunit (SSU) processome, composed of more than 70 proteins and the RNA chaperone small nucleolar RNA (snoRNA) U3.

It localises to the cytoplasm. The protein resides in the nucleus. Its subcellular location is the nucleolus. Component of the small ribosomal subunit. The ribosome is a large ribonucleoprotein complex responsible for the synthesis of proteins in the cell. Part of the small subunit (SSU) processome, first precursor of the small eukaryotic ribosomal subunit. During the assembly of the SSU processome in the nucleolus, many ribosome biogenesis factors, an RNA chaperone and ribosomal proteins associate with the nascent pre-rRNA and work in concert to generate RNA folding, modifications, rearrangements and cleavage as well as targeted degradation of pre-ribosomal RNA by the RNA exosome. May play a role during erythropoiesis. The sequence is that of Small ribosomal subunit protein eS1 from Ophiophagus hannah (King cobra).